The chain runs to 800 residues: Protein MICRORCHIDIA 4 (800 aa).

Disordered stretches follow at residues 1–76 (MEPI…ARSD) and 552–702 (AKRQ…RTLS). A compositionally biased stretch (polar residues) spans 9–18 (NPVTTSTLST). Residues 36-47 (ELSSSNEGSELG) show a composition bias toward low complexity. 2 stretches are compositionally biased toward basic and acidic residues: residues 559–578 (SAKD…EFDP) and 628–641 (VSKD…EKGG). Over residues 666–675 (NSDDDYDCDS) the composition is skewed to acidic residues. A coiled-coil region spans residues 699–766 (RTLSQLEQEN…QASLIDVFAE (68 aa)). 2 short sequence motifs (nuclear localization signal) span residues 716–723 (DKKEEVFL) and 735–742 (LRKTLEAE).

This sequence belongs to the MORC ATPase protein family. In terms of assembly, homodimer and heterodimer. Component of an RNA-directed DNA methylation (RdDM) complex. Forms homomeric complexes. Mg(2+) is required as a cofactor. The cofactor is Mn(2+).

It is found in the nucleus. In terms of biological role, exhibits ATPase activity. Binds DNA/RNA in a non-specific manner and exhibits endonuclease activity. Probably involved in DNA repair. Involved in RNA-directed DNA methylation (RdDM) as a component of the RdDM machinery and required for gene silencing. May also be involved in the regulation of chromatin architecture to maintain gene silencing. Together with MORC7, acts to suppress a wide set of non-methylated protein-coding genes, especially involved in pathogen response. Positive regulator of defense against the oomycete Hyaloperonospora arabidopsidis (Hpa). This is Protein MICRORCHIDIA 4 from Arabidopsis thaliana (Mouse-ear cress).